Consider the following 443-residue polypeptide: Tol-Pal system protein TolB (443 aa).

Residues 1–33 form the signal peptide; it reads MKIGIINTKIRTVFSAFACMIAASLVCTMPARA.

This sequence belongs to the TolB family. As to quaternary structure, the Tol-Pal system is composed of five core proteins: the inner membrane proteins TolA, TolQ and TolR, the periplasmic protein TolB and the outer membrane protein Pal. They form a network linking the inner and outer membranes and the peptidoglycan layer.

The protein localises to the periplasm. In terms of biological role, part of the Tol-Pal system, which plays a role in outer membrane invagination during cell division and is important for maintaining outer membrane integrity. The protein is Tol-Pal system protein TolB of Brucella anthropi (strain ATCC 49188 / DSM 6882 / CCUG 24695 / JCM 21032 / LMG 3331 / NBRC 15819 / NCTC 12168 / Alc 37) (Ochrobactrum anthropi).